A 369-amino-acid polypeptide reads, in one-letter code: tRNA 2-selenouridine synthase (369 aa).

The 124-residue stretch at 15-138 (FLNQHPMMDV…MRQYLIGVIE (124 aa)) folds into the Rhodanese domain. Cys-98 serves as the catalytic S-selanylcysteine intermediate.

Belongs to the SelU family. In terms of assembly, monomer.

The enzyme catalyses 5-methylaminomethyl-2-thiouridine(34) in tRNA + selenophosphate + (2E)-geranyl diphosphate + H2O + H(+) = 5-methylaminomethyl-2-selenouridine(34) in tRNA + (2E)-thiogeraniol + phosphate + diphosphate. The catalysed reaction is 5-methylaminomethyl-2-thiouridine(34) in tRNA + (2E)-geranyl diphosphate = 5-methylaminomethyl-S-(2E)-geranyl-thiouridine(34) in tRNA + diphosphate. It catalyses the reaction 5-methylaminomethyl-S-(2E)-geranyl-thiouridine(34) in tRNA + selenophosphate + H(+) = 5-methylaminomethyl-2-(Se-phospho)selenouridine(34) in tRNA + (2E)-thiogeraniol. It carries out the reaction 5-methylaminomethyl-2-(Se-phospho)selenouridine(34) in tRNA + H2O = 5-methylaminomethyl-2-selenouridine(34) in tRNA + phosphate. Functionally, involved in the post-transcriptional modification of the uridine at the wobble position (U34) of tRNA(Lys), tRNA(Glu) and tRNA(Gln). Catalyzes the conversion of 2-thiouridine (S2U-RNA) to 2-selenouridine (Se2U-RNA). Acts in a two-step process involving geranylation of 2-thiouridine (S2U) to S-geranyl-2-thiouridine (geS2U) and subsequent selenation of the latter derivative to 2-selenouridine (Se2U) in the tRNA chain. In Shewanella sp. (strain W3-18-1), this protein is tRNA 2-selenouridine synthase.